A 196-amino-acid polypeptide reads, in one-letter code: C-type lectin domain family 2 member F (196 aa).

The interval 1-21 (MNAQCLKKPEEGESSPGTGDK) is disordered. Residues 1–41 (MNAQCLKKPEEGESSPGTGDKILQRNSLRAISPESSAKLYC) are Cytoplasmic-facing. Residues 42–62 (CCGVIMVLTVAVVALSVALPA) traverse the membrane as a helical; Signal-anchor for type II membrane protein segment. Residues 63–196 (TKTEQILINK…SRSSNYMLQC (134 aa)) lie on the Extracellular side of the membrane. An intrachain disulfide couples cysteine 77 to cysteine 88. The C-type lectin domain occupies 84–187 (VGNKCFYFSE…DYIPRKWICS (104 aa)). An N-linked (GlcNAc...) asparagine glycan is attached at asparagine 97. Cysteine 105 and cysteine 186 form a disulfide bridge.

The protein localises to the cell membrane. In terms of biological role, lectin-type cell surface receptor. The sequence is that of C-type lectin domain family 2 member F (Clec2f) from Mus musculus (Mouse).